The following is a 360-amino-acid chain: Photosystem II protein D1 (360 aa).

Transmembrane regions (helical) follow at residues tyrosine 29–threonine 46, histidine 118–leucine 133, and tryptophan 142–alanine 156. Histidine 118 contacts chlorophyll a. Tyrosine 126 contributes to the pheophytin a binding site. [CaMn4O5] cluster-binding residues include aspartate 170 and glutamate 189. Residues phenylalanine 197–leucine 218 traverse the membrane as a helical segment. Residue histidine 198 coordinates chlorophyll a. Residues histidine 215 and serine 264–phenylalanine 265 each bind a quinone. Histidine 215 serves as a coordination point for Fe cation. Histidine 272 contacts Fe cation. A helical membrane pass occupies residues phenylalanine 274 to methionine 288. [CaMn4O5] cluster-binding residues include histidine 332, glutamate 333, aspartate 342, and alanine 344. Residues serine 345 to glycine 360 constitute a propeptide that is removed on maturation.

The protein belongs to the reaction center PufL/M/PsbA/D family. In terms of assembly, PSII is composed of 1 copy each of membrane proteins PsbA, PsbB, PsbC, PsbD, PsbE, PsbF, PsbH, PsbI, PsbJ, PsbK, PsbL, PsbM, PsbT, PsbX, PsbY, PsbZ, Psb30/Ycf12, peripheral proteins PsbO, CyanoQ (PsbQ), PsbU, PsbV and a large number of cofactors. It forms dimeric complexes. The D1/D2 heterodimer binds P680, chlorophylls that are the primary electron donor of PSII, and subsequent electron acceptors. It shares a non-heme iron and each subunit binds pheophytin, quinone, additional chlorophylls, carotenoids and lipids. D1 provides most of the ligands for the Mn4-Ca-O5 cluster of the oxygen-evolving complex (OEC). There is also a Cl(-1) ion associated with D1 and D2, which is required for oxygen evolution. The PSII complex binds additional chlorophylls, carotenoids and specific lipids. serves as cofactor. Tyr-161 forms a radical intermediate that is referred to as redox-active TyrZ, YZ or Y-Z. Post-translationally, C-terminally processed by CtpA; processing is essential to allow assembly of the oxygen-evolving complex and thus photosynthetic growth.

The protein localises to the cellular thylakoid membrane. The catalysed reaction is 2 a plastoquinone + 4 hnu + 2 H2O = 2 a plastoquinol + O2. In terms of biological role, photosystem II (PSII) is a light-driven water:plastoquinone oxidoreductase that uses light energy to abstract electrons from H(2)O, generating O(2) and a proton gradient subsequently used for ATP formation. It consists of a core antenna complex that captures photons, and an electron transfer chain that converts photonic excitation into a charge separation. The D1/D2 (PsbA/PsbD) reaction center heterodimer binds P680, the primary electron donor of PSII as well as several subsequent electron acceptors. In Microcystis aeruginosa, this protein is Photosystem II protein D1.